The primary structure comprises 186 residues: UPF0301 protein HI_0304 (186 aa).

This sequence belongs to the UPF0301 (AlgH) family.

The chain is UPF0301 protein HI_0304 from Haemophilus influenzae (strain ATCC 51907 / DSM 11121 / KW20 / Rd).